Reading from the N-terminus, the 638-residue chain is MKGGCVSQWKAAAGFLFCVMVFASAERPVFTNHFLVELHKGGEDKARQVAAEHGFGVRKLPFAEGLYHFYHNGLAKAKRRRSLHHKQQLERDPRVKMALQQEGFDRKKRGYRDINEIDINMNDPLFTKQWYLINTGQADGTPGLDLNVAEAWELGYTGKGVTIGIMDDGIDYLHPDLASNYNAEASYDFSSNDPYPYPRYTDDWFNSHGTRCAGEVSAAANNNICGVGVAYNSKVAGIRMLDQPFMTDIIEASSISHMPQLIDIYSASWGPTDNGKTVDGPRELTLQAMADGVNKGRGGKGSIYVWASGDGGSYDDCNCDGYASSMWTISINSAINDGRTALYDESCSSTLASTFSNGRKRNPEAGVATTDLYGNCTLRHSGTSAAAPEAAGVFALALEANLGLTWRDMQHLTVLTSKRNQLHDEVHQWRRNGVGLEFNHLFGYGVLDAGAMVKMAKDWKTVPERFHCVGGSVQDPEKIPSTGKLVLTLTTDACEGKENFVRYLEHVQAVITVNATRRGDLNINMTSPMGTKSILLSRRPRDDDSKVGFDKWPFMTTHTWGEDARGTWTLELGFVGSAPQKGVLKEWTLMLHGTQSAPYIDQVVRDYQSKLAMSKKEELEEELDEAVERSLKSILNKN.

The N-terminal stretch at 1 to 25 (MKGGCVSQWKAAAGFLFCVMVFASA) is a signal peptide. A propeptide spanning residues 26–109 (ERPVFTNHFL…QQEGFDRKKR (84 aa)) is cleaved from the precursor. Positions 129–453 (QWYLINTGQA…YGVLDAGAMV (325 aa)) constitute a Peptidase S8 domain. Catalysis depends on charge relay system residues Asp167 and His208. Disulfide bonds link Cys225-Cys376 and Cys317-Cys347. The N-linked (GlcNAc...) asparagine glycan is linked to Asn375. Ser384 serves as the catalytic Charge relay system. The P/Homo B domain occupies 461 to 597 (TVPERFHCVG…TLMLHGTQSA (137 aa)). Cys468 and Cys494 are disulfide-bonded. N-linked (GlcNAc...) asparagine glycans are attached at residues Asn514 and Asn524.

Belongs to the peptidase S8 family. Furin subfamily.

It localises to the cytoplasmic vesicle. Its subcellular location is the secretory vesicle. The protein localises to the secreted. It catalyses the reaction Release of protein hormones and neuropeptides from their precursors, generally by hydrolysis of -Lys-Arg-|- bonds.. Serine endopeptidase which is involved in the processing of hormone and other protein precursors at sites comprised of pairs of basic amino acid residues. Responsible for the release of glucagon from proglucagon in pancreatic A cells. The sequence is that of Neuroendocrine convertase 2 (PCSK2) from Homo sapiens (Human).